Consider the following 170-residue polypeptide: Acireductone dioxygenase (170 aa).

Residues His99, His101, Glu105, and His144 each coordinate Fe(2+). Ni(2+) contacts are provided by His99, His101, Glu105, and His144.

This sequence belongs to the acireductone dioxygenase (ARD) family. In terms of assembly, monomer. It depends on Fe(2+) as a cofactor. Ni(2+) serves as cofactor.

It carries out the reaction 1,2-dihydroxy-5-(methylsulfanyl)pent-1-en-3-one + O2 = 3-(methylsulfanyl)propanoate + CO + formate + 2 H(+). The catalysed reaction is 1,2-dihydroxy-5-(methylsulfanyl)pent-1-en-3-one + O2 = 4-methylsulfanyl-2-oxobutanoate + formate + 2 H(+). It functions in the pathway amino-acid biosynthesis; L-methionine biosynthesis via salvage pathway; L-methionine from S-methyl-5-thio-alpha-D-ribose 1-phosphate: step 5/6. Its function is as follows. Catalyzes 2 different reactions between oxygen and the acireductone 1,2-dihydroxy-3-keto-5-methylthiopentene (DHK-MTPene) depending upon the metal bound in the active site. Fe-containing acireductone dioxygenase (Fe-ARD) produces formate and 2-keto-4-methylthiobutyrate (KMTB), the alpha-ketoacid precursor of methionine in the methionine recycle pathway. Ni-containing acireductone dioxygenase (Ni-ARD) produces methylthiopropionate, carbon monoxide and formate, and does not lie on the methionine recycle pathway. In Bacillus cereus (strain ATCC 14579 / DSM 31 / CCUG 7414 / JCM 2152 / NBRC 15305 / NCIMB 9373 / NCTC 2599 / NRRL B-3711), this protein is Acireductone dioxygenase.